A 193-amino-acid polypeptide reads, in one-letter code: Shikimate kinase (193 aa).

31–36 provides a ligand contact to ATP; the sequence is GVGKTT. A Mg(2+)-binding site is contributed by Thr-35. Residues Asp-53, Arg-77, and Gly-103 each coordinate substrate. Arg-141 contributes to the ATP binding site. Arg-160 lines the substrate pocket. Residue Gln-176 coordinates ATP.

Belongs to the shikimate kinase family. Monomer. Mg(2+) is required as a cofactor.

The protein localises to the cytoplasm. The catalysed reaction is shikimate + ATP = 3-phosphoshikimate + ADP + H(+). Its pathway is metabolic intermediate biosynthesis; chorismate biosynthesis; chorismate from D-erythrose 4-phosphate and phosphoenolpyruvate: step 5/7. Its function is as follows. Catalyzes the specific phosphorylation of the 3-hydroxyl group of shikimic acid using ATP as a cosubstrate. This chain is Shikimate kinase, found in Novosphingobium aromaticivorans (strain ATCC 700278 / DSM 12444 / CCUG 56034 / CIP 105152 / NBRC 16084 / F199).